The following is a 296-amino-acid chain: Phosphatidylglycerol--prolipoprotein diacylglyceryl transferase (296 aa).

The next 4 helical transmembrane spans lie at 28–48, 72–92, 110–130, and 139–159; these read WYGL…IYLA, FALY…ILFY, GGLA…IFSW, and LTFL…AFMI. Arg-160 contacts a 1,2-diacyl-sn-glycero-3-phospho-(1'-sn-glycerol). The next 3 membrane-spanning stretches (helical) occupy residues 197–217, 226–246, and 263–283; these read VQLY…FLSY, GWVT…AEFF, and GQIL…ACFL.

It belongs to the Lgt family.

The protein resides in the cell inner membrane. It catalyses the reaction L-cysteinyl-[prolipoprotein] + a 1,2-diacyl-sn-glycero-3-phospho-(1'-sn-glycerol) = an S-1,2-diacyl-sn-glyceryl-L-cysteinyl-[prolipoprotein] + sn-glycerol 1-phosphate + H(+). The protein operates within protein modification; lipoprotein biosynthesis (diacylglyceryl transfer). In terms of biological role, catalyzes the transfer of the diacylglyceryl group from phosphatidylglycerol to the sulfhydryl group of the N-terminal cysteine of a prolipoprotein, the first step in the formation of mature lipoproteins. The sequence is that of Phosphatidylglycerol--prolipoprotein diacylglyceryl transferase from Chlamydia caviae (strain ATCC VR-813 / DSM 19441 / 03DC25 / GPIC) (Chlamydophila caviae).